We begin with the raw amino-acid sequence, 67 residues long: Protein LITTLE ZIPPER 3 (67 aa).

The stretch at 14-59 forms a coiled coil; that stretch reads YIMKENERLRKKAELLNQENQQLLFQLKQKLSKTKNSNNGSNNDNK. The interval 42–67 is disordered; sequence QKLSKTKNSNNGSNNDNKSSSASGQS.

As to quaternary structure, interacts with REV. Interacts with ATBH-8, ATBH-9, ATB-14 and ATB-15. In terms of tissue distribution, expressed in the adaxial epidermis of the cotyledons and leaves, and in the vascular cylinder of wild-type torpedo stage embryos. Confined in the central zone and the organizing center in the shoot apical meristem.

It localises to the nucleus. Competitive inhibitor of the HD-ZIPIII transcription factors in shoot apical meristem (SAM) development. Acts by forming non-functional heterodimers. Part of a negative feedback loop. Involved in SAM development and lateral organ patterning. Essential for proper functioning of stem cells in the SAM. The chain is Protein LITTLE ZIPPER 3 from Arabidopsis thaliana (Mouse-ear cress).